Here is a 373-residue protein sequence, read N- to C-terminus: tRNA (guanine(26)-N(2))-dimethyltransferase (373 aa).

Positions 2–365 constitute a Trm1 methyltransferase domain; that stretch reads KIISEGETKL…AELSDLVVLI (364 aa). S-adenosyl-L-methionine is bound by residues R35, R66, D86, D113, and A114.

Belongs to the class I-like SAM-binding methyltransferase superfamily. Trm1 family.

The enzyme catalyses guanosine(26) in tRNA + 2 S-adenosyl-L-methionine = N(2)-dimethylguanosine(26) in tRNA + 2 S-adenosyl-L-homocysteine + 2 H(+). Dimethylates a single guanine residue at position 26 of a number of tRNAs using S-adenosyl-L-methionine as donor of the methyl groups. In Methanococcus maripaludis (Methanococcus deltae), this protein is tRNA (guanine(26)-N(2))-dimethyltransferase.